The chain runs to 602 residues: Elongation factor 4 (602 aa).

One can recognise a tr-type G domain in the interval 5–187 (DHIRNFAIIA…QIIVSLPAPE (183 aa)). GTP contacts are provided by residues 17 to 22 (DHGKST) and 134 to 137 (NKVD).

The protein belongs to the TRAFAC class translation factor GTPase superfamily. Classic translation factor GTPase family. LepA subfamily.

The protein resides in the cell inner membrane. It catalyses the reaction GTP + H2O = GDP + phosphate + H(+). Required for accurate and efficient protein synthesis under certain stress conditions. May act as a fidelity factor of the translation reaction, by catalyzing a one-codon backward translocation of tRNAs on improperly translocated ribosomes. Back-translocation proceeds from a post-translocation (POST) complex to a pre-translocation (PRE) complex, thus giving elongation factor G a second chance to translocate the tRNAs correctly. Binds to ribosomes in a GTP-dependent manner. This chain is Elongation factor 4, found in Pelagibacter ubique (strain HTCC1062).